The chain runs to 172 residues: C-phycocyanin beta chain (172 aa).

(2R,3E)-phycocyanobilin is bound by residues asparagine 35, aspartate 39, asparagine 72, arginine 77, cysteine 82, 82–88 (CLRDMEI), 149–151 (TIG), and cysteine 153. Asparagine 72 carries the post-translational modification N4-methylasparagine.

It belongs to the phycobiliprotein family. In terms of assembly, heterodimer of an alpha and a beta subunit, which further assembles into trimers and the trimers into hexamers. The basic functional unit of phycobiliproteins is a ring-shaped hexamer formed from two back-to-back trimers contacting via the alpha chain subunits. The trimers are composed of alpha/beta subunit heterodimers arranged around a three-fold axis of symmetry. The phycoerythrins also contain a gamma subunit which is located in the center of the hexamer. Contains two covalently linked phycocyanobilin chromophores.

The protein resides in the plastid. It localises to the chloroplast thylakoid membrane. Its function is as follows. Light-harvesting photosynthetic tetrapyrrole chromophore-protein from the phycobiliprotein complex (phycobilisome, PBS). Phycocyanin is the major phycobiliprotein in the PBS rod. The chain is C-phycocyanin beta chain (cpcB) from Cyanidium caldarium (Red alga).